Consider the following 364-residue polypeptide: Ribosomal RNA large subunit methyltransferase M (364 aa).

S-adenosyl-L-methionine contacts are provided by residues Ser194, 227-230 (CPGG), Asp246, Asp266, and Asp284. The Proton acceptor role is filled by Lys313.

Belongs to the class I-like SAM-binding methyltransferase superfamily. RNA methyltransferase RlmE family. RlmM subfamily. Monomer.

The protein resides in the cytoplasm. It catalyses the reaction cytidine(2498) in 23S rRNA + S-adenosyl-L-methionine = 2'-O-methylcytidine(2498) in 23S rRNA + S-adenosyl-L-homocysteine + H(+). Its function is as follows. Catalyzes the 2'-O-methylation at nucleotide C2498 in 23S rRNA. The chain is Ribosomal RNA large subunit methyltransferase M from Actinobacillus succinogenes (strain ATCC 55618 / DSM 22257 / CCUG 43843 / 130Z).